The following is a 555-amino-acid chain: Connector enhancer of kinase suppressor of ras 3 (555 aa).

The SAM domain occupies 7–72 (WSPKQVVDWT…LEAVDLLCAL (66 aa)). The 95-residue stretch at 80–174 (TMKNLVLKLR…TAVQKDCLIA (95 aa)) folds into the CRIC domain. Residues 211-293 (EVHLPNVRPG…GVVLLLKKRP (83 aa)) form the PDZ domain. 3 disordered regions span residues 308-333 (RWKPPLVQTSPPPTTTQSPESTMDAS), 362-389 (SFGYRGHSKSKQPLPVRKGSESPNSFLD), and 518-538 (PFQEEGSKKKSASSSAKASSG). The span at 311–329 (PPLVQTSPPPTTTQSPEST) shows a compositional bias: low complexity. A DUF1170 domain is found at 325-546 (SPESTMDASL…SGEPSLLVSW (222 aa)). A phosphoserine mark is found at Ser-381 and Ser-383.

The protein belongs to the CNKSR family. Interacts with epithelial sodium channel ENaC. Interacts directly with SCNN1A (ENaC subunit alpha) and SCNN1B (ENaC subunit beta) C-terminal tails. Interacts with ENaC regulatory proteins NEDD4L, RAF1 and SGK1. Expressed in kidney.

The protein resides in the cytoplasm. The protein localises to the apical cell membrane. Functionally, involved in transepithelial sodium transport. Regulates aldosterone-induced and epithelial sodium channel (ENaC)-mediated sodium transport through regulation of ENaC cell surface expression. Acts as a scaffold protein coordinating the assembly of an ENaC-regulatory complex (ERC). This is Connector enhancer of kinase suppressor of ras 3 (Cnksr3) from Mus musculus (Mouse).